Here is a 591-residue protein sequence, read N- to C-terminus: NADP-dependent malic enzyme (591 aa).

Tyr139 acts as the Proton donor in catalysis. An NAD(+)-binding site is contributed by Arg192. Lys210 acts as the Proton acceptor in catalysis. 3 residues coordinate a divalent metal cation: Glu282, Asp283, and Asp306. NAD(+) is bound at residue Asp306. 335 to 351 is a binding site for NADP(+); sequence LFLGAGEAGTGIAELIA. Asn447 lines the NAD(+) pocket.

It belongs to the malic enzymes family. In terms of assembly, homotetramer. Requires Mg(2+) as cofactor. Mn(2+) serves as cofactor.

It is found in the cytoplasm. The enzyme catalyses (S)-malate + NADP(+) = pyruvate + CO2 + NADPH. It catalyses the reaction oxaloacetate + H(+) = pyruvate + CO2. The chain is NADP-dependent malic enzyme from Vitis vinifera (Grape).